The chain runs to 495 residues: Taxoid 2-alpha-hydroxylase (495 aa).

The helical transmembrane segment at 17–37 threads the bilayer; the sequence is LQSSAILLTVVSGIIVIVILL. Position 441 (cysteine 441) interacts with heme.

It belongs to the cytochrome P450 family.

Its subcellular location is the microsome membrane. The enzyme catalyses taxusin + reduced [NADPH--hemoprotein reductase] + O2 = 2alpha-hydroxytaxusin + oxidized [NADPH--hemoprotein reductase] + H2O + H(+). It catalyses the reaction 7beta-hydroxytaxusin + reduced [NADPH--hemoprotein reductase] + O2 = 2alpha,7beta-dihydroxytaxusin + oxidized [NADPH--hemoprotein reductase] + H2O + H(+). It functions in the pathway alkaloid biosynthesis; taxol biosynthesis. Functionally, catalyzes the conversion of taxusin to 2-alpha-hydroxytaxusin in taxol biosynthesis. Catalyzes the conversion of 7-beta-hydroxytaxusin to 2-alpha-7-beta-hydroxytaxusin in taxol biosynthesis. In Taxus canadensis (Canadian yew), this protein is Taxoid 2-alpha-hydroxylase.